The chain runs to 663 residues: MEPVPLQDFVSGLDPTSLPRVLRVCSGVYFEGSVYELFGNECCLSTGDLIKVTHVQLQKVVCEYPETGQTLELNPNFTGLFSPLTSLRSYRTLEDLVSAMPQNSTRWPIYFKSTQRIVTKASVVPEDQPLRLEAVEIHHGIRYARCVQVSKTKELLHLPLSQKGPFWRCKPSAPQTLHQILQDPALKDLTLSCPSLPWNSVILKPQYMLQAIMHMRSSIVKIPSTLEVEVEDVTASSQHIHFFKPLRLSEVLAGGGPFPLTTEILEVPEGPPVFLSPWVSFLRKGQRLCIYGPASPSWRVVASSKSRKVPRYFMLSGAYQGKLKRRPREFSTAYDLLGALQPGRPLRVVATKDCDGNEEENPDFSFLAVGDRLEVLRSGQVCGTKGQDIDVLVCQRLSEQSGEEEEDLEEIEDEAEDKEQILLPLYLSGSFVEEVNDSRRYNLVDLTAQYSLPCEVKVVTKDTRHPTDPLASFPGLRLEEKLTEPFLVVSLDSQPEMCFEIPPRWLDLTVVEAEGQPAQVARPLSIAPVEELSEAFYYSLRKLPASESQAPPPRPPKSQGINKKQQNIQSCKESSVKPQVVEPQKSCPQPQLKAKTLEALPKNKSNVYSKISVHKKDRKPNPQTQNSVLSMKPKTSSSLGKHSTMESHLLPDPDMDDHDYEEI.

CABIT regions lie at residues 2-237 (EPVP…TASS) and 238-515 (QHIH…EAEG). The disordered stretch occupies residues 545 to 663 (ASESQAPPPR…DMDDHDYEEI (119 aa)). A compositionally biased stretch (polar residues) spans 559 to 577 (QGINKKQQNIQSCKESSVK). Phosphothreonine is present on Thr-596. A compositionally biased stretch (polar residues) spans 621 to 641 (NPQTQNSVLSMKPKTSSSLGK). Acidic residues predominate over residues 653–663 (PDMDDHDYEEI). Tyr-660 is modified (phosphotyrosine).

The protein belongs to the themis family. As to quaternary structure, interacts with VAV1. Interacts with LAT. Interacts constitutively with GRB2, LYN and PLCG2; these interactions increase the activation of PLCG2 and its downstream pathways following B cell receptor stimulation. Phosphorylation at Tyr-660 is induced by LPS. Phosphorylated by Src kinases (Lck or Fyn) following BCR engagement. In terms of tissue distribution, expressed in both developing and mature B-cells with high expression in immature, follicular and B1 B cells. Also expressed in macrophages and dendritic cells. Down-regulated in splenocytes of mice developing arthritis in a collagen-induced model, not in those of mice failing to develop the disease. Transiently down-regulated in splenocytes of mice infected with influenza virus.

The protein localises to the nucleus. The protein resides in the cytoplasm. Its function is as follows. May constitute a control point in macrophage inflammatory response, promoting LPS-induced TLR4-mediated TNF production. Determines the threshold for activation of B cells by low-affinity and low-avidity ligands via PLCG2 activation and its downstream pathways. The protein is Protein THEMIS2 of Mus musculus (Mouse).